The primary structure comprises 101 residues: Apolipoprotein C-II (101 aa).

A signal peptide spans Met1 to Gly22. The O-glycosylated at one site stretch occupies residues Thr23–Thr38. The segment at Ala66–Leu74 is lipid binding. The tract at residues Ser78–Glu101 is lipoprotein lipase cofactor.

The protein belongs to the apolipoprotein C2 family. Proapolipoprotein C-II is synthesized as a sialic acid containing glycoprotein which is subsequently desialylated prior to its proteolytic processing. In terms of processing, proapolipoprotein C-II, the major form found in plasma undergoes proteolytic cleavage of its N-terminal hexapeptide to generate apolipoprotein C-II, which occurs as the minor form in plasma. Liver and intestine.

The protein resides in the secreted. Component of chylomicrons, very low-density lipoproteins (VLDL), low-density lipoproteins (LDL), and high-density lipoproteins (HDL) in plasma. Plays an important role in lipoprotein metabolism as an activator of lipoprotein lipase. Both proapolipoprotein C-II and apolipoprotein C-II can activate lipoprotein lipase. In normolipidemic individuals, it is mainly distributed in the HDL, whereas in hypertriglyceridemic individuals, predominantly found in the VLDL and LDL. In Homo sapiens (Human), this protein is Apolipoprotein C-II (APOC2).